A 275-amino-acid polypeptide reads, in one-letter code: NH(3)-dependent NAD(+) synthetase (275 aa).

An ATP-binding site is contributed by 46 to 53; the sequence is GISGGQDS. Asp-52 serves as a coordination point for Mg(2+). Arg-140 is a deamido-NAD(+) binding site. Thr-160 is an ATP binding site. Residue Glu-165 coordinates Mg(2+). Lys-173 and Asp-180 together coordinate deamido-NAD(+). The ATP site is built by Lys-189 and Thr-211. Position 260 to 261 (260 to 261) interacts with deamido-NAD(+); that stretch reads HK.

It belongs to the NAD synthetase family. Homodimer.

It catalyses the reaction deamido-NAD(+) + NH4(+) + ATP = AMP + diphosphate + NAD(+) + H(+). The protein operates within cofactor biosynthesis; NAD(+) biosynthesis; NAD(+) from deamido-NAD(+) (ammonia route): step 1/1. Its function is as follows. Catalyzes the ATP-dependent amidation of deamido-NAD to form NAD. Uses ammonia as a nitrogen source. This chain is NH(3)-dependent NAD(+) synthetase, found in Salmonella agona (strain SL483).